Here is a 314-residue protein sequence, read N- to C-terminus: Cathepsin L 2 (314 aa).

An N-terminal signal peptide occupies residues 1–24 (MMLLGASLYLNNTQEVSDEIDTAN). The propeptide at 25–109 (LYANWKMKYN…NASNANFQYK (85 aa)) is activation peptide. Cystine bridges form between cysteine 132–cysteine 175, cysteine 166–cysteine 207, and cysteine 259–cysteine 302. The active site involves cysteine 135. Active-site residues include histidine 265 and asparagine 282.

This sequence belongs to the peptidase C1 family.

It localises to the secreted. The catalysed reaction is Specificity close to that of papain. As compared to cathepsin B, cathepsin L exhibits higher activity toward protein substrates, but has little activity on Z-Arg-Arg-NHMec, and no peptidyl-dipeptidase activity.. May be involved in extracellular digestion. The chain is Cathepsin L 2 from Paramecium tetraurelia.